A 443-amino-acid chain; its full sequence is ATP-dependent protease ATPase subunit HslU (443 aa).

ATP-binding positions include I18, G60–E65, D256, E321, and R393.

The protein belongs to the ClpX chaperone family. HslU subfamily. A double ring-shaped homohexamer of HslV is capped on each side by a ring-shaped HslU homohexamer. The assembly of the HslU/HslV complex is dependent on binding of ATP.

The protein resides in the cytoplasm. Functionally, ATPase subunit of a proteasome-like degradation complex; this subunit has chaperone activity. The binding of ATP and its subsequent hydrolysis by HslU are essential for unfolding of protein substrates subsequently hydrolyzed by HslV. HslU recognizes the N-terminal part of its protein substrates and unfolds these before they are guided to HslV for hydrolysis. The sequence is that of ATP-dependent protease ATPase subunit HslU from Escherichia fergusonii (strain ATCC 35469 / DSM 13698 / CCUG 18766 / IAM 14443 / JCM 21226 / LMG 7866 / NBRC 102419 / NCTC 12128 / CDC 0568-73).